Here is an 883-residue protein sequence, read N- to C-terminus: DNA mismatch repair protein MutS (883 aa).

ATP is bound at residue 633–640 (GPNMGGKS).

It belongs to the DNA mismatch repair MutS family.

This protein is involved in the repair of mismatches in DNA. It is possible that it carries out the mismatch recognition step. This protein has a weak ATPase activity. The polypeptide is DNA mismatch repair protein MutS (Bordetella pertussis (strain Tohama I / ATCC BAA-589 / NCTC 13251)).